Reading from the N-terminus, the 898-residue chain is Magnesium-transporting ATPase, P-type 1 (898 aa).

Topologically, residues 1-94 (MFKEIFTRLI…QPSPWWVHLW (94 aa)) are cytoplasmic. Residues 95-115 (VCYRNPFNILLTILGAISYAT) traverse the membrane as a helical segment. Glu116 is a topological domain (extracellular). The chain crosses the membrane as a helical span at residues 117–137 (DLFAAGVIALMVAISTLLNFI). At 138–287 (QEARSTKAAD…PNAFQQGISR (150 aa)) the chain is on the cytoplasmic side. The helical transmembrane segment at 288–308 (VSMLLIRFMLVMAPVVLLING) threads the bilayer. Topologically, residues 309 to 317 (YTKGDWWEA) are extracellular. The helical transmembrane segment at 318 to 335 (ALFALSVAVGLTPEMLPM) threads the bilayer. Position 331 (Glu331) interacts with Mg(2+). At 336–695 (IVTSTLARGA…IEGRRTFANM (360 aa)) the chain is on the cytoplasmic side. Asp373 acts as the 4-aspartylphosphate intermediate in catalysis. Mg(2+)-binding residues include Asp641, Asp645, and Asn709. Residues 696-715 (LKYIKMTASSNFGNVFSVLV) traverse the membrane as a helical segment. Over 716–724 (ASAFLPFLP) the chain is Extracellular. The helical transmembrane segment at 725 to 744 (MLPLHLLIQNLLYDVSQVAI) threads the bilayer. Residues Asn734 and Asp738 each contribute to the Mg(2+) site. Residues 745–766 (PFDNVDDEQIQKPQRWNPADLG) are Cytoplasmic-facing. The helical transmembrane segment at 767–790 (RFMIFFGPISSIFDILTFCLMWWV) threads the bilayer. Topologically, residues 791-799 (FHANTPETQ) are extracellular. A helical transmembrane segment spans residues 800-818 (TLFQSGWFVVGLLSQTLIV). At 819–831 (HMIRTRRVPFIQS) the chain is on the cytoplasmic side. Residues 832–851 (CASWPLMIMTVIVMIVGIAL) form a helical membrane-spanning segment. The Extracellular segment spans residues 852-866 (PFSPLASYLQLQALP). Residues 867-886 (LSYFPWLVAILAGYMTLTQL) traverse the membrane as a helical segment. Residues 887-898 (VKGFYSRRYGWQ) lie on the Cytoplasmic side of the membrane.

Belongs to the cation transport ATPase (P-type) (TC 3.A.3) family. Type IIIB subfamily.

Its subcellular location is the cell inner membrane. The enzyme catalyses Mg(2+)(out) + ATP + H2O = Mg(2+)(in) + ADP + phosphate + H(+). Functionally, mediates magnesium influx to the cytosol. In Escherichia coli O157:H7, this protein is Magnesium-transporting ATPase, P-type 1 (mgtA).